A 204-amino-acid chain; its full sequence is MSAIKTITKASHLIDMNDIIREGHPTLRAVAQDVTFPLNEDDIILGEKMLQFLKNSQDPVTAEKMELRGGVGLAAPQLDISKRIIAVLIPNPEDKDGNPPKEAYALKEVMYNPRIIAHSVQDAALADGEGCLSVDRVVEGYVIRHSRVTIEYYDKNSDKKKLKLKGYQSIVVQHEIDHTNGIMFFDRINEKNPFEIKEGLLLIE.

2 residues coordinate Fe cation: C131 and H174. Residue E175 is part of the active site. H178 provides a ligand contact to Fe cation.

Belongs to the polypeptide deformylase family. It depends on Fe(2+) as a cofactor.

The enzyme catalyses N-terminal N-formyl-L-methionyl-[peptide] + H2O = N-terminal L-methionyl-[peptide] + formate. Its function is as follows. Removes the formyl group from the N-terminal Met of newly synthesized proteins. Requires at least a dipeptide for an efficient rate of reaction. N-terminal L-methionine is a prerequisite for activity but the enzyme has broad specificity at other positions. In Streptococcus mutans serotype c (strain ATCC 700610 / UA159), this protein is Peptide deformylase.